The following is a 360-amino-acid chain: Protein Wnt-2 (360 aa).

A signal peptide spans 1-25; sequence MNAPLGGIWLWLPLLLTWLTPEVNS. 11 cysteine pairs are disulfide-bonded: Cys-76-Cys-87, Cys-127-Cys-135, Cys-137-Cys-157, Cys-206-Cys-220, Cys-208-Cys-215, Cys-278-Cys-309, Cys-294-Cys-304, Cys-308-Cys-348, Cys-324-Cys-339, Cys-326-Cys-336, and Cys-331-Cys-332. Ser-212 is lipidated: O-palmitoleoyl serine; by PORCN. N-linked (GlcNAc...) asparagine glycosylation occurs at Asn-295.

Belongs to the Wnt family. In terms of processing, palmitoleoylation is required for efficient binding to frizzled receptors. Depalmitoleoylation leads to Wnt signaling pathway inhibition. In terms of tissue distribution, expressed in brain in the thalamus, in fetal and adult lung and in placenta.

The protein resides in the secreted. It localises to the extracellular space. The protein localises to the extracellular matrix. In terms of biological role, ligand for members of the frizzled family of seven transmembrane receptors. Functions in the canonical Wnt signaling pathway that results in activation of transcription factors of the TCF/LEF family. Functions as a upstream regulator of FGF10 expression. Plays an important role in embryonic lung development. May contribute to embryonic brain development by regulating the proliferation of dopaminergic precursors and neurons. This chain is Protein Wnt-2 (WNT2), found in Homo sapiens (Human).